A 256-amino-acid chain; its full sequence is Isoprenyl transferase (256 aa).

D33 is an active-site residue. D33 lines the Mg(2+) pocket. Substrate contacts are provided by residues 34 to 37 (GNGR), W38, R46, H50, and 78 to 80 (STE). Catalysis depends on N81, which acts as the Proton acceptor. Residues W82, R84, R201, and 207–209 (RIS) each bind substrate. E220 is a Mg(2+) binding site.

This sequence belongs to the UPP synthase family. In terms of assembly, homodimer. It depends on Mg(2+) as a cofactor.

Its function is as follows. Catalyzes the condensation of isopentenyl diphosphate (IPP) with allylic pyrophosphates generating different type of terpenoids. This is Isoprenyl transferase from Staphylococcus aureus (strain COL).